The following is a 52-amino-acid chain: UPF0057 membrane protein At1g57550 (52 aa).

Helical transmembrane passes span 4–24 (FLEVLCAIFIPPVGVFLRYGL) and 30–50 (VCLLLTLFAFIPGLIYAIYVL).

It belongs to the UPF0057 (PMP3) family.

It is found in the membrane. In Arabidopsis thaliana (Mouse-ear cress), this protein is UPF0057 membrane protein At1g57550.